The sequence spans 571 residues: uncharacterized protein (571 aa).

Helical transmembrane passes span 5-27, 34-56, 61-79, 92-114, 161-183, 391-408, 412-434, 455-474, 484-506, 513-532, and 547-569; these read VILN…GYLV, TFVL…LNIT, IGSL…QGGA, LLAS…AWIF, TVGY…ATIF, FIFF…GLIS, FGIS…FGWI, LGLA…QAIT, FFLG…YYLL, VLLA…AALL, and SYAL…VTII.

The protein belongs to the AAE transporter (TC 2.A.81) family.

It localises to the cell membrane. This is an uncharacterized protein from Francisella tularensis subsp. tularensis (strain SCHU S4 / Schu 4).